Consider the following 194-residue polypeptide: Transposon Tn2501 resolvase (194 aa).

In terms of domain architecture, Resolvase/invertase-type recombinase catalytic spans Arg3–Gly143. Ser11 functions as the O-(5'-phospho-DNA)-serine intermediate in the catalytic mechanism. The H-T-H motif DNA-binding region spans Ile170–Ala189.

It belongs to the site-specific recombinase resolvase family.

Resolvase catalyzes the resolution (a site-specific recombination) of the cointegrated replicon to yield the final transposition products. The sequence is that of Transposon Tn2501 resolvase (tnpR) from Escherichia coli.